A 383-amino-acid polypeptide reads, in one-letter code: tRNA (guanine-N(7)-)-methyltransferase non-catalytic subunit wuho (383 aa).

WD repeat units lie at residues 61 to 101 (NLEV…ALLL), 105 to 144 (ALAR…APPK), 148 to 187 (GHLS…DIHS), 191 to 231 (GHKE…EVLQ), and 289 to 329 (AGSW…QAES).

The protein belongs to the WD repeat TRM82 family. In terms of assembly, forms a heterodimer with the catalytic subunit Mettl1. Interacts with mei-P26 and weakly interacts with bgcn; required for the function or formation of the mei-P26-bgcn-bam-sxl complex. Interacts with nanos; may be involved in mei-P26-dependent derepression of the BMP signaling pathway. Interacts with Myc; the interaction may be mediated by mei-P26 and may be involved in the regulation of ribosome biogenesis. In terms of tissue distribution, in testis, it is present at high level in hub cells, a niche for germline stem cells of testis. Ubiquitously expressed in all testicular cells throughout spermatogenesis. Ubiquitously expressed in all germline and somatic cells of the ovary.

It localises to the nucleus. The protein localises to the cytoplasm. The protein operates within tRNA modification; N(7)-methylguanine-tRNA biosynthesis. Required for the Mettl1-dependent formation of N(7)-methylguanine at position 46 (m7G46) in tRNA. In the Mettl1-wuho methyltransferase complex, it is required to stabilize and induce conformational changes of the catalytic subunit. Required for binding of nanos mRNA and repression of translation by the mei-P26-bgcn-bam-sxl complex. May cooperate with mei-P26 and nanos to derepress the BMP signaling pathway. May cooperate with mei-P26 to suppress expression of a subset of microRNAs. May cooperate with mei-P26 to regulate bam expression levels in germline cells during gametogenesis. Required to promote mitosis to meiosis transition during gametogenesis. May regulate germline cell division in part by regulating ribosome biogenesis. The chain is tRNA (guanine-N(7)-)-methyltransferase non-catalytic subunit wuho from Drosophila mojavensis (Fruit fly).